The sequence spans 46 residues: Viscotoxin-1-PS (46 aa).

3 disulfide bridges follow: C3–C40, C4–C32, and C16–C26.

Belongs to the plant thionin (TC 1.C.44) family.

The protein resides in the secreted. In terms of biological role, thionins are small plant proteins which are toxic to animal cells. They seem to exert their toxic effect at the level of the cell membrane. Their precise function is not known. This chain is Viscotoxin-1-PS (THI2.4), found in Viscum album (European mistletoe).